Here is a 76-residue protein sequence, read N- to C-terminus: Centromere protein W (76 aa).

This sequence belongs to the CENP-W/WIP1 family. Heterodimer with CENPT; this dimer coassembles with CENPS-CENPX heterodimers at centromeres to form the tetrameric CENP-T-W-S-X complex, which is a subcomplex of the large constitutive centromere-associated network (CCAN, also known as the interphase centromere complex or ICEN). Interacts with NPM1.

The protein resides in the nucleus. The protein localises to the chromosome. It localises to the centromere. Its subcellular location is the kinetochore. Functionally, component of the CENPA-NAC (nucleosome-associated) complex, a complex that plays a central role in assembly of kinetochore proteins, mitotic progression and chromosome segregation. The CENPA-NAC complex recruits the CENPA-CAD (nucleosome distal) complex and may be involved in incorporation of newly synthesized CENPA into centromeres. Part of a nucleosome-associated complex that binds specifically to histone H3-containing nucleosomes at the centromere, as opposed to nucleosomes containing CENPA. Component of the heterotetrameric CENP-T-W-S-X complex that binds and supercoils DNA, and plays an important role in kinetochore assembly. CENPW has a fundamental role in kinetochore assembly and function. It is one of the inner kinetochore proteins, with most further proteins binding downstream. Required for normal chromosome organization and normal progress through mitosis. The sequence is that of Centromere protein W (CENPW) from Gallus gallus (Chicken).